The chain runs to 162 residues: Eukaryotic translation initiation factor 5 (162 aa).

The disordered stretch occupies residues 59 to 162 (PPNLNPAVQG…EKDRMDIFYE (104 aa)). Residues 85 to 109 (GDTNGDTSQVDDQNESLEASVNENS) show a composition bias toward polar residues. Residues 148 to 162 (DLEKREKDRMDIFYE) are compositionally biased toward basic and acidic residues.

The protein belongs to the eIF-2-beta/eIF-5 family.

Functionally, catalyzes the hydrolysis of GTP bound to the 40S ribosomal initiation complex (40S.mRNA.Met-tRNA[F].eIF-2.GTP) with the subsequent joining of a 60S ribosomal subunit resulting in the release of eIF-2 and the guanine nucleotide. The subsequent joining of a 60S ribosomal subunit results in the formation of a functional 80S initiation complex (80S.mRNA.Met-tRNA[F]). The chain is Eukaryotic translation initiation factor 5 from Tribolium castaneum (Red flour beetle).